The sequence spans 145 residues: Thioredoxin C-3 (145 aa).

3 residues coordinate heme: C25, C28, and H29. The Thioredoxin domain occupies H29–Q140. Residues C65 and C68 are joined by a disulfide bond.

This sequence belongs to the thioredoxin family.

In terms of biological role, participates in various redox reactions through the reversible oxidation of its active center dithiol to a disulfide and catalyzes dithiol-disulfide exchange reactions. The chain is Thioredoxin C-3 from Corynebacterium nephridii.